The sequence spans 839 residues: LPS-assembly protein LptD (839 aa).

The N-terminal stretch at 1 to 21 is a signal peptide; sequence MAIGITACVLSLINYQGLAYS.

Belongs to the LptD family. As to quaternary structure, component of the lipopolysaccharide transport and assembly complex. Interacts with LptE and LptA.

Its subcellular location is the cell outer membrane. Its function is as follows. Together with LptE, is involved in the assembly of lipopolysaccharide (LPS) at the surface of the outer membrane. This chain is LPS-assembly protein LptD, found in Legionella pneumophila subsp. pneumophila (strain Philadelphia 1 / ATCC 33152 / DSM 7513).